Consider the following 126-residue polypeptide: Phosphoribosyl-ATP pyrophosphatase (126 aa).

The protein belongs to the PRA-PH family.

Its subcellular location is the cytoplasm. It carries out the reaction 1-(5-phospho-beta-D-ribosyl)-ATP + H2O = 1-(5-phospho-beta-D-ribosyl)-5'-AMP + diphosphate + H(+). It functions in the pathway amino-acid biosynthesis; L-histidine biosynthesis; L-histidine from 5-phospho-alpha-D-ribose 1-diphosphate: step 2/9. This chain is Phosphoribosyl-ATP pyrophosphatase, found in Variovorax paradoxus (strain S110).